A 763-amino-acid chain; its full sequence is Pentatricopeptide repeat-containing protein At4g32430, mitochondrial (763 aa).

A mitochondrion-targeting transit peptide spans 1–38; the sequence is MTLLNYLHCNRSKSFLFQRFYSPYRIAHKLFDGSSQRN. 17 PPR repeats span residues 77-109, 110-140, 141-172, 173-207, 208-238, 239-274, 275-309, 310-344, 350-370, 371-405, 406-436, 437-471, 472-507, 508-538, 539-573, 574-604, and 610-640; these read DEVT…GFTS, FVCV…LVDP, DVVS…GVVF, DAFT…GLES, DLVV…MSFK, DMIS…GVEL, DHVS…GYES, LLEV…NVVS, SSNK…GVYP, NEVT…GFVS, EPSV…ITFR, EIIS…TMPN, EYTF…GLNS, CPVV…MSQK, NQFV…NVAP, DLVT…MIEV, and SHEH…VPGG. The tract at residues 645 to 720 is type E motif; it reads MLQSMLGSCR…EAGFSWIDVG (76 aa). Residues 724–756 form a type E(+) motif region; sequence GSLTMQGFSSGDKSHPKSDEIYRMVEIIGLEMN.

The protein belongs to the PPR family. PCMP-E subfamily.

It is found in the mitochondrion. The sequence is that of Pentatricopeptide repeat-containing protein At4g32430, mitochondrial (PCMP-E40) from Arabidopsis thaliana (Mouse-ear cress).